Reading from the N-terminus, the 488-residue chain is 2,3-bisphosphoglycerate-independent phosphoglycerate mutase (488 aa).

S10 (phosphoserine intermediate) is an active-site residue. Mn(2+) is bound at residue S10. Substrate is bound by residues H69, 99 to 100, R135, R142, 215 to 218, and K290; these read RD and RADR. Mn(2+) is bound by residues D359, H363, D400, H401, and H430.

This sequence belongs to the BPG-independent phosphoglycerate mutase family. In terms of assembly, monomer. Mn(2+) is required as a cofactor.

It is found in the cytoplasm. The catalysed reaction is (2R)-2-phosphoglycerate = (2R)-3-phosphoglycerate. The protein operates within carbohydrate degradation; glycolysis; pyruvate from D-glyceraldehyde 3-phosphate: step 3/5. In terms of biological role, catalyzes the interconversion of 2-phosphoglycerate and 3-phosphoglycerate. The polypeptide is 2,3-bisphosphoglycerate-independent phosphoglycerate mutase (Prunus dulcis (Almond)).